A 301-amino-acid polypeptide reads, in one-letter code: Recombination-associated protein RdgC (301 aa).

It belongs to the RdgC family.

It is found in the cytoplasm. The protein localises to the nucleoid. Functionally, may be involved in recombination. The polypeptide is Recombination-associated protein RdgC (Xanthomonas oryzae pv. oryzae (strain KACC10331 / KXO85)).